Here is a 281-residue protein sequence, read N- to C-terminus: 2,3,4,5-tetrahydropyridine-2,6-dicarboxylate N-succinyltransferase (281 aa).

Positions 108 and 145 each coordinate substrate.

It belongs to the transferase hexapeptide repeat family. In terms of assembly, homotrimer.

The protein localises to the cytoplasm. The enzyme catalyses (S)-2,3,4,5-tetrahydrodipicolinate + succinyl-CoA + H2O = (S)-2-succinylamino-6-oxoheptanedioate + CoA. The protein operates within amino-acid biosynthesis; L-lysine biosynthesis via DAP pathway; LL-2,6-diaminopimelate from (S)-tetrahydrodipicolinate (succinylase route): step 1/3. This Rhodopseudomonas palustris (strain ATCC BAA-98 / CGA009) protein is 2,3,4,5-tetrahydropyridine-2,6-dicarboxylate N-succinyltransferase.